We begin with the raw amino-acid sequence, 228 residues long: Outer membrane protein assembly factor BamE (228 aa).

A signal peptide spans 1–29 (MNPILKGVYSPARLGVVALTLFGILGVTG). A lipid anchor (N-palmitoyl cysteine) is attached at C30. C30 carries S-diacylglycerol cysteine lipidation. A disordered region spans residues 197-228 (DFFGSSKKDPDPQSPQLGPGTLNDVPKPADSK).

It belongs to the BamE family. As to quaternary structure, part of the Bam complex.

Its subcellular location is the cell outer membrane. Functionally, part of the outer membrane protein assembly complex, which is involved in assembly and insertion of beta-barrel proteins into the outer membrane. This is Outer membrane protein assembly factor BamE from Polynucleobacter necessarius subsp. necessarius (strain STIR1).